The primary structure comprises 206 residues: MDSAGQDINLNSPNKGLLSDSMTDVPVDTGVAARTPAVEGLTEAEEEELRAELTKVEEEIVTLRQVLAAKERHCGELKRRLGLSTLGGLKQNLSRSWHDVQVSNAYVKTSEKLGEWNEKVTQSDLYKKTQETLSQAGQKTSAALSTMGSAISRKLGDMRNSATFKSFEDRVGTIKSKVVGDRENGSDSLPSSAGSGDKPLSDPAPF.

Methionine 1 carries the N-acetylmethionine modification. Over residues 1–14 (MDSAGQDINLNSPN) the composition is skewed to polar residues. Residues 1–24 (MDSAGQDINLNSPNKGLLSDSMTD) form a disordered region. A phosphoserine mark is found at serine 3, serine 12, serine 19, and serine 21. Residues 38 to 82 (VEGLTEAEEEELRAELTKVEEEIVTLRQVLAAKERHCGELKRRLG) are a coiled coil. Serine 96, serine 149, and serine 161 each carry phosphoserine. A Phosphothreonine modification is found at threonine 163. Position 166 is a phosphoserine (serine 166). The residue at position 173 (threonine 173) is a Phosphothreonine. A compositionally biased stretch (basic and acidic residues) spans 175-185 (KSKVVGDRENG). The segment at 175–206 (KSKVVGDRENGSDSLPSSAGSGDKPLSDPAPF) is disordered. 2 positions are modified to phosphoserine: serine 192 and serine 195.

Belongs to the TPD52 family. In terms of assembly, forms a homodimer or heterodimer with other members of the family. Interacts with MAL2.

The sequence is that of Tumor protein D54 (TPD52L2) from Pongo abelii (Sumatran orangutan).